Here is a 62-residue protein sequence, read N- to C-terminus: Large ribosomal subunit protein bL28 (62 aa).

The interval 1-22 is disordered; sequence MGKQCFVTGRKASTGNRRSHAL.

The protein belongs to the bacterial ribosomal protein bL28 family.

The chain is Large ribosomal subunit protein bL28 from Staphylococcus aureus (strain N315).